The sequence spans 345 residues: uncharacterized protein (345 aa).

This is an uncharacterized protein from Saccharomyces cerevisiae (strain ATCC 204508 / S288c) (Baker's yeast).